We begin with the raw amino-acid sequence, 226 residues long: RPA-interacting protein A (226 aa).

The segment at 1–45 is interaction with importin beta; that stretch reads MEAERRHRALYKGTTPPWKETYRKRCVERLKRNRSKLLDKFRQVG. An interaction with RPA1 region spans residues 49-171; the sequence is HGGVGGSFLV…QCGVYINTQS (123 aa). The segment at 144-219 adopts an RIP-type zinc-finger fold; it reads CPVCNRNYLT…ASLFMSCQEC (76 aa).

In terms of assembly, interacts directly with the rpa1 subunit of RPA complex. Interacts with importin beta, but not with importin alpha. Forms a complex with the RPA complex and importin beta, which is dissociated by Ran-GTP.

It is found in the nucleus. Functionally, mediates the import of RPA complex into the nucleus, via its interaction with importin beta. The sequence is that of RPA-interacting protein A (rpain-a) from Xenopus laevis (African clawed frog).